The primary structure comprises 292 residues: Ribosomal protein L11 methyltransferase (292 aa).

S-adenosyl-L-methionine-binding residues include Thr-136, Gly-159, Asp-181, and Asn-228.

It belongs to the methyltransferase superfamily. PrmA family.

It is found in the cytoplasm. The enzyme catalyses L-lysyl-[protein] + 3 S-adenosyl-L-methionine = N(6),N(6),N(6)-trimethyl-L-lysyl-[protein] + 3 S-adenosyl-L-homocysteine + 3 H(+). Methylates ribosomal protein L11. The polypeptide is Ribosomal protein L11 methyltransferase (Rhizobium rhizogenes (strain K84 / ATCC BAA-868) (Agrobacterium radiobacter)).